A 62-amino-acid chain; its full sequence is LKLQKRLAASYLKCGKGKVWLDPNEVSEISMANSRQNIRKLVKDGFIIKKPHKIHSRSRCKK.

The protein belongs to the eukaryotic ribosomal protein eL19 family.

The polypeptide is Large ribosomal subunit protein eL19 (RPL19) (Zea mays (Maize)).